The chain runs to 115 residues: MNMLVALSVNIALSMCLITIAFWLPQLNMYTEKANPYECGFDPMSSARLPFSMKFFLVAITFLLFDLEIALLLPLPWAIQMNNINTMMLTSFILVSVLALGLAYEWMQKGLEWTE.

The next 3 helical transmembrane spans lie at 4–24 (LVALSVNIALSMCLITIAFWL), 55–75 (FFLVAITFLLFDLEIALLLPL), and 87–107 (MMLTSFILVSVLALGLAYEWM).

The protein belongs to the complex I subunit 3 family. In terms of assembly, core subunit of respiratory chain NADH dehydrogenase (Complex I) which is composed of 45 different subunits. Interacts with TMEM186. Interacts with TMEM242.

The protein localises to the mitochondrion inner membrane. The catalysed reaction is a ubiquinone + NADH + 5 H(+)(in) = a ubiquinol + NAD(+) + 4 H(+)(out). Core subunit of the mitochondrial membrane respiratory chain NADH dehydrogenase (Complex I) which catalyzes electron transfer from NADH through the respiratory chain, using ubiquinone as an electron acceptor. Essential for the catalytic activity of complex I. The chain is NADH-ubiquinone oxidoreductase chain 3 from Habromys lophurus (Crested-tailed deer mouse).